Reading from the N-terminus, the 431-residue chain is Tol-Pal system protein TolB (431 aa).

The first 24 residues, 1–24 (MMKFLTRMLSAFAVLFFAISTAQA), serve as a signal peptide directing secretion. Positions 318 to 340 (QVYRMSSSGGAASPVGGRGSAQI) are disordered. Low complexity predominate over residues 323-332 (SSSGGAASPV).

The protein belongs to the TolB family. In terms of assembly, the Tol-Pal system is composed of five core proteins: the inner membrane proteins TolA, TolQ and TolR, the periplasmic protein TolB and the outer membrane protein Pal. They form a network linking the inner and outer membranes and the peptidoglycan layer.

The protein resides in the periplasm. Functionally, part of the Tol-Pal system, which plays a role in outer membrane invagination during cell division and is important for maintaining outer membrane integrity. The chain is Tol-Pal system protein TolB from Mannheimia succiniciproducens (strain KCTC 0769BP / MBEL55E).